The following is a 901-amino-acid chain: HTH-type transcriptional regulator MalT (901 aa).

39-46 (SPAGYGKT) contributes to the ATP binding site. One can recognise an HTH luxR-type domain in the interval 829-894 (ELIRTSPLTQ…DAVQHAQQLL (66 aa)). A DNA-binding region (H-T-H motif) is located at residues 853–872 (NEQIAGELAVAATTIKTHIR).

It belongs to the MalT family. In terms of assembly, monomer in solution. Oligomerizes to an active state in the presence of the positive effectors ATP and maltotriose.

Its activity is regulated as follows. Activated by ATP and maltotriose, which are both required for DNA binding. Functionally, positively regulates the transcription of the maltose regulon whose gene products are responsible for uptake and catabolism of malto-oligosaccharides. Specifically binds to the promoter region of its target genes, recognizing a short DNA motif called the MalT box. In Salmonella choleraesuis (strain SC-B67), this protein is HTH-type transcriptional regulator MalT.